The sequence spans 1065 residues: Exportin-T (1065 aa).

The protein belongs to the exportin family.

Its subcellular location is the nucleus. The protein localises to the cytoplasm. Functionally, tRNA nucleus export receptor which facilitates tRNA translocation across the nuclear pore complex. Involved in pre-tRNA splicing, probably by affecting the interaction of pre-tRNA with splicing endonuclease. The chain is Exportin-T (LOS1) from Coprinopsis cinerea (strain Okayama-7 / 130 / ATCC MYA-4618 / FGSC 9003) (Inky cap fungus).